The following is a 99-amino-acid chain: Large ribosomal subunit protein uL23c (99 aa).

Belongs to the universal ribosomal protein uL23 family. Part of the 50S ribosomal subunit.

The protein localises to the plastid. It is found in the chloroplast. Binds to 23S rRNA. This is Large ribosomal subunit protein uL23c (rpl23) from Emiliania huxleyi (Coccolithophore).